The chain runs to 437 residues: UDP-N-acetylmuramate--L-alanine ligase (437 aa).

Residue 108–114 (GAHGKTS) participates in ATP binding.

It belongs to the MurCDEF family.

Its subcellular location is the cytoplasm. It catalyses the reaction UDP-N-acetyl-alpha-D-muramate + L-alanine + ATP = UDP-N-acetyl-alpha-D-muramoyl-L-alanine + ADP + phosphate + H(+). The protein operates within cell wall biogenesis; peptidoglycan biosynthesis. In terms of biological role, cell wall formation. This is UDP-N-acetylmuramate--L-alanine ligase from Staphylococcus aureus (strain JH9).